A 199-amino-acid polypeptide reads, in one-letter code: NAD(P)H dehydrogenase (quinone) (199 aa).

The Flavodoxin-like domain maps to 4–190; it reads VLVLYYSAYG…EAAKYQGAHV (187 aa). FMN-binding positions include 10 to 15 and 78 to 80; these read SAYGHI and TRF. Residue tyrosine 12 coordinates NAD(+). Tryptophan 98 is a substrate binding site. Residues 113 to 119 and histidine 134 contribute to the FMN site; that span reads SSATQHG.

The protein belongs to the WrbA family. Requires FMN as cofactor.

It carries out the reaction a quinone + NADH + H(+) = a quinol + NAD(+). The enzyme catalyses a quinone + NADPH + H(+) = a quinol + NADP(+). In Rhizobium rhizogenes (strain K84 / ATCC BAA-868) (Agrobacterium radiobacter), this protein is NAD(P)H dehydrogenase (quinone).